The chain runs to 389 residues: Sedoheptulose-1,7-bisphosphatase, chloroplastic (389 aa).

An intrachain disulfide couples Cys115 to Cys120. The Mg(2+) site is built by Asp126, Glu155, Asp173, Leu175, and Asp176. Residues 176-179 (DGSS), Tyr287, and Lys317 contribute to the substrate site. Glu323 serves as a coordination point for Mg(2+).

This sequence belongs to the FBPase class 1 family. In terms of assembly, homodimer. Mg(2+) is required as a cofactor.

It localises to the plastid. The protein localises to the chloroplast. It catalyses the reaction D-sedoheptulose 1,7-bisphosphate + H2O = D-sedoheptulose 7-phosphate + phosphate. Its pathway is carbohydrate biosynthesis; Calvin cycle. The chain is Sedoheptulose-1,7-bisphosphatase, chloroplastic (CSBP) from Chlamydomonas reinhardtii (Chlamydomonas smithii).